The primary structure comprises 130 residues: Large ribosomal subunit protein bL17 (130 aa).

This sequence belongs to the bacterial ribosomal protein bL17 family. Part of the 50S ribosomal subunit. Contacts protein L32.

This Nitrosomonas europaea (strain ATCC 19718 / CIP 103999 / KCTC 2705 / NBRC 14298) protein is Large ribosomal subunit protein bL17.